Consider the following 390-residue polypeptide: Guanidine hydrolase (390 aa).

Ni(2+) contacts are provided by His-174, Asp-199, His-201, Asp-203, Asp-291, and Asp-293.

It belongs to the arginase family. In terms of assembly, homohexamer. The cofactor is Ni(2+).

It is found in the cytoplasm. It carries out the reaction guanidine + H2O = urea + NH4(+). Activation of GdmH depends on the presence of the accessory proteins GhaA (Sll1078) and GhaB (Sll1079), which load nickel into the active site. Hydrolase activity is slightly activated in the presence of GTP. It does not require ATP or NAD(P)H. Addition of Ca(2+), Mn(2+), Fe(2+) or Fe(3+) has no consistent effects, whereas addition of Co(2+), Cu(2+) or Zn(2+) inhibits the activity. Its function is as follows. Catalyzes the hydrolysis of guanidine into urea and ammonium. Is highly specific for free guanidine. At pH 8, also catalyzes the release of urea from methylguanidine but with significantly reduced specific activity compared with that for guanidine. Cannot hydrolyze guanidinoacetate, guanidinopropionate, guanidinobutyrate, agmatine, arginine or creatine. Required to use guanidine as the sole nitrogen source for growth. Overexpression of the gene accelerates guanidine degradation and promotes biomass growth. This Synechocystis sp. (strain ATCC 27184 / PCC 6803 / Kazusa) protein is Guanidine hydrolase.